Here is a 247-residue protein sequence, read N- to C-terminus: Triosephosphate isomerase (247 aa).

9–11 (NWK) provides a ligand contact to substrate. H94 acts as the Electrophile in catalysis. The active-site Proton acceptor is the E166. Substrate contacts are provided by residues G172, S211, and 232 to 233 (GG).

The protein belongs to the triosephosphate isomerase family. As to quaternary structure, homodimer.

It localises to the cytoplasm. It carries out the reaction D-glyceraldehyde 3-phosphate = dihydroxyacetone phosphate. It participates in carbohydrate biosynthesis; gluconeogenesis. It functions in the pathway carbohydrate degradation; glycolysis; D-glyceraldehyde 3-phosphate from glycerone phosphate: step 1/1. Functionally, involved in the gluconeogenesis. Catalyzes stereospecifically the conversion of dihydroxyacetone phosphate (DHAP) to D-glyceraldehyde-3-phosphate (G3P). The polypeptide is Triosephosphate isomerase (Cupriavidus taiwanensis (strain DSM 17343 / BCRC 17206 / CCUG 44338 / CIP 107171 / LMG 19424 / R1) (Ralstonia taiwanensis (strain LMG 19424))).